A 316-amino-acid polypeptide reads, in one-letter code: Formimidoylglutamase (316 aa).

Mn(2+) contacts are provided by His127, Asp156, His158, Asp160, Asp247, and Asp249.

It belongs to the arginase family. It depends on Mn(2+) as a cofactor.

The catalysed reaction is N-formimidoyl-L-glutamate + H2O = formamide + L-glutamate. It functions in the pathway amino-acid degradation; L-histidine degradation into L-glutamate; L-glutamate from N-formimidoyl-L-glutamate (hydrolase route): step 1/1. Functionally, catalyzes the conversion of N-formimidoyl-L-glutamate to L-glutamate and formamide. In Cupriavidus pinatubonensis (strain JMP 134 / LMG 1197) (Cupriavidus necator (strain JMP 134)), this protein is Formimidoylglutamase.